Here is an 836-residue protein sequence, read N- to C-terminus: Protein AKNAD1 (836 aa).

Polar residues-rich tracts occupy residues 159–172 (SWPK…TDQL), 181–192 (SNKPGSATTTEE), and 227–248 (SYQG…NTFK). 2 disordered regions span residues 159 to 248 (SWPK…NTFK) and 303 to 325 (LETT…KITE). The segment covering 311 to 323 (CVEKQHQEQKGKI) has biased composition (basic and acidic residues). A coiled-coil region spans residues 372–484 (QKISQGKQMC…DVKEKMDESK (113 aa)). 2 disordered regions span residues 510-545 (SNEI…EAPN) and 575-596 (MRLS…DCAE).

It belongs to the AKNA family.

This chain is Protein AKNAD1 (AKNAD1), found in Homo sapiens (Human).